We begin with the raw amino-acid sequence, 146 residues long: Large ribosomal subunit protein uL15 (146 aa).

Positions Met1–Gly56 are disordered. The segment covering Arg24 to Ala34 has biased composition (gly residues).

This sequence belongs to the universal ribosomal protein uL15 family. Part of the 50S ribosomal subunit.

Its function is as follows. Binds to the 23S rRNA. This Bordetella bronchiseptica (strain ATCC BAA-588 / NCTC 13252 / RB50) (Alcaligenes bronchisepticus) protein is Large ribosomal subunit protein uL15.